The following is a 359-amino-acid chain: Phosphoserine aminotransferase (359 aa).

Arg41 is a binding site for L-glutamate. Pyridoxal 5'-phosphate contacts are provided by residues 75–76 (AS), Trp101, Thr151, Asp171, and Gln194. Lys195 is subject to N6-(pyridoxal phosphate)lysine. 236-237 (NT) lines the pyridoxal 5'-phosphate pocket.

Belongs to the class-V pyridoxal-phosphate-dependent aminotransferase family. SerC subfamily. Homodimer. Pyridoxal 5'-phosphate is required as a cofactor.

The protein resides in the cytoplasm. The enzyme catalyses O-phospho-L-serine + 2-oxoglutarate = 3-phosphooxypyruvate + L-glutamate. The catalysed reaction is 4-(phosphooxy)-L-threonine + 2-oxoglutarate = (R)-3-hydroxy-2-oxo-4-phosphooxybutanoate + L-glutamate. It participates in amino-acid biosynthesis; L-serine biosynthesis; L-serine from 3-phospho-D-glycerate: step 2/3. Its pathway is cofactor biosynthesis; pyridoxine 5'-phosphate biosynthesis; pyridoxine 5'-phosphate from D-erythrose 4-phosphate: step 3/5. Catalyzes the reversible conversion of 3-phosphohydroxypyruvate to phosphoserine and of 3-hydroxy-2-oxo-4-phosphonooxybutanoate to phosphohydroxythreonine. The chain is Phosphoserine aminotransferase from Thiobacillus denitrificans (strain ATCC 25259 / T1).